The following is a 139-amino-acid chain: Probable trafficking protein particle complex subunit 2 (139 aa).

The protein belongs to the TRAPP small subunits family. Sedlin subfamily. Part of the multisubunit TRAPP (transport protein particle) complex.

It is found in the cytoplasm. Its subcellular location is the perinuclear region. The protein localises to the endoplasmic reticulum. It localises to the golgi apparatus. Functionally, may play a role in vesicular transport from endoplasmic reticulum to Golgi. Involved in dsRNA uptake. In Drosophila melanogaster (Fruit fly), this protein is Probable trafficking protein particle complex subunit 2.